The primary structure comprises 359 residues: Histidinol-phosphate aminotransferase 1 (359 aa).

Residue Lys-216 is modified to N6-(pyridoxal phosphate)lysine.

It belongs to the class-II pyridoxal-phosphate-dependent aminotransferase family. Histidinol-phosphate aminotransferase subfamily. In terms of assembly, homodimer. Pyridoxal 5'-phosphate is required as a cofactor.

It carries out the reaction L-histidinol phosphate + 2-oxoglutarate = 3-(imidazol-4-yl)-2-oxopropyl phosphate + L-glutamate. It functions in the pathway amino-acid biosynthesis; L-histidine biosynthesis; L-histidine from 5-phospho-alpha-D-ribose 1-diphosphate: step 7/9. This is Histidinol-phosphate aminotransferase 1 (hisC1) from Caulobacter vibrioides (strain ATCC 19089 / CIP 103742 / CB 15) (Caulobacter crescentus).